The following is a 677-amino-acid chain: Elongation factor G 2 (677 aa).

In terms of domain architecture, tr-type G spans 8 to 283 (SRIRNIGIIA…AVVNFLPSPE (276 aa)). Residues 17-24 (AHIDAGKT), 81-85 (DTPGH), and 135-138 (NKMD) contribute to the GTP site.

Belongs to the TRAFAC class translation factor GTPase superfamily. Classic translation factor GTPase family. EF-G/EF-2 subfamily.

It is found in the cytoplasm. Catalyzes the GTP-dependent ribosomal translocation step during translation elongation. During this step, the ribosome changes from the pre-translocational (PRE) to the post-translocational (POST) state as the newly formed A-site-bound peptidyl-tRNA and P-site-bound deacylated tRNA move to the P and E sites, respectively. Catalyzes the coordinated movement of the two tRNA molecules, the mRNA and conformational changes in the ribosome. The sequence is that of Elongation factor G 2 from Syntrophus aciditrophicus (strain SB).